Here is a 206-residue protein sequence, read N- to C-terminus: FMN-dependent NADH:quinone oxidoreductase (206 aa).

FMN contacts are provided by residues 15–17 (SVS), 94–97 (MYNF), and 138–141 (TRGG).

It belongs to the azoreductase type 1 family. As to quaternary structure, homodimer. FMN serves as cofactor.

It catalyses the reaction 2 a quinone + NADH + H(+) = 2 a 1,4-benzosemiquinone + NAD(+). It carries out the reaction N,N-dimethyl-1,4-phenylenediamine + anthranilate + 2 NAD(+) = 2-(4-dimethylaminophenyl)diazenylbenzoate + 2 NADH + 2 H(+). In terms of biological role, quinone reductase that provides resistance to thiol-specific stress caused by electrophilic quinones. Its function is as follows. Also exhibits azoreductase activity. Catalyzes the reductive cleavage of the azo bond in aromatic azo compounds to the corresponding amines. This Sinorhizobium fredii (strain NBRC 101917 / NGR234) protein is FMN-dependent NADH:quinone oxidoreductase.